We begin with the raw amino-acid sequence, 151 residues long: U-scoloptoxin(17)-Er2a (151 aa).

Residues 1 to 22 (MKSFFVVFAIVFQATLVALSLA) form the signal peptide.

Belongs to the scoloptoxin-17 family. In terms of processing, contains 5 disulfide bonds. Expressed by the venom gland.

It is found in the secreted. The protein is U-scoloptoxin(17)-Er2a of Ethmostigmus rubripes (Giant centipede).